We begin with the raw amino-acid sequence, 154 residues long: Ribonuclease P protein subunit p21 (154 aa).

Residue alanine 2 is modified to N-acetylalanine. Positions 62, 65, 92, and 95 each coordinate Zn(2+). The segment at 117 to 154 (QLGSQADSKPLQPLPNTAHSISDRLPEEKMQTQGSSNQ) is disordered. The span at 137 to 146 (ISDRLPEEKM) shows a compositional bias: basic and acidic residues.

Belongs to the eukaryotic/archaeal RNase P protein component 4 family. RNase P consists of a catalytic RNA moiety and about 10 protein subunits; POP1, POP4, POP5, POP7, RPP14, RPP21, RPP25, RPP30, RPP38 and RPP40. Within the RNase P complex, POP1, POP7 and RPP25 form the 'finger' subcomplex, POP5, RPP14, RPP40 and homodimeric RPP30 form the 'palm' subcomplex, and RPP21, POP4 and RPP38 form the 'wrist' subcomplex. All subunits of the RNase P complex interact with the catalytic RNA.

The protein localises to the nucleus. The protein resides in the nucleolus. In terms of biological role, component of ribonuclease P, a ribonucleoprotein complex that generates mature tRNA molecules by cleaving their 5'-ends. The sequence is that of Ribonuclease P protein subunit p21 (RPP21) from Homo sapiens (Human).